The chain runs to 510 residues: 2,3-bisphosphoglycerate-independent phosphoglycerate mutase (510 aa).

Residues D13 and S63 each coordinate Mn(2+). The active-site Phosphoserine intermediate is the S63. Residues H124, 154-155, R186, R192, 262-265, and K334 each bind substrate; these read RD and RADR. Mn(2+) is bound by residues D401, H405, D442, H443, and H461.

The protein belongs to the BPG-independent phosphoglycerate mutase family. As to quaternary structure, monomer. The cofactor is Mn(2+).

It carries out the reaction (2R)-2-phosphoglycerate = (2R)-3-phosphoglycerate. It functions in the pathway carbohydrate degradation; glycolysis; pyruvate from D-glyceraldehyde 3-phosphate: step 3/5. Its function is as follows. Catalyzes the interconversion of 2-phosphoglycerate and 3-phosphoglycerate. The protein is 2,3-bisphosphoglycerate-independent phosphoglycerate mutase of Vibrio cholerae serotype O1 (strain ATCC 39541 / Classical Ogawa 395 / O395).